The primary structure comprises 520 residues: Peptide chain release factor 3 (520 aa).

A tr-type G domain is found at glutamate 8–serine 273. Residues serine 17–threonine 24, aspartate 85–histidine 89, and asparagine 139–aspartate 142 contribute to the GTP site.

The protein belongs to the TRAFAC class translation factor GTPase superfamily. Classic translation factor GTPase family. PrfC subfamily.

The protein localises to the cytoplasm. Increases the formation of ribosomal termination complexes and stimulates activities of RF-1 and RF-2. It binds guanine nucleotides and has strong preference for UGA stop codons. It may interact directly with the ribosome. The stimulation of RF-1 and RF-2 is significantly reduced by GTP and GDP, but not by GMP. This Macrococcus caseolyticus (strain JCSC5402) (Macrococcoides caseolyticum) protein is Peptide chain release factor 3.